The chain runs to 479 residues: Trigger factor (479 aa).

The 88-residue stretch at 174–261 folds into the PPIase FKBP-type domain; it reads GDIAVVSFSG…LKELKTRELP (88 aa). Residues 438–479 are disordered; sequence VLESEAKTSKPAAKSKGSKTKSTKTKTNKANTEKPASDKSKS. A compositionally biased stretch (basic residues) spans 453 to 464; the sequence is KGSKTKSTKTKT. Over residues 468–479 the composition is skewed to basic and acidic residues; that stretch reads NTEKPASDKSKS.

This sequence belongs to the FKBP-type PPIase family. Tig subfamily.

It localises to the cytoplasm. It carries out the reaction [protein]-peptidylproline (omega=180) = [protein]-peptidylproline (omega=0). Involved in protein export. Acts as a chaperone by maintaining the newly synthesized protein in an open conformation. Functions as a peptidyl-prolyl cis-trans isomerase. This is Trigger factor from Prochlorococcus marinus (strain MIT 9313).